Here is a 372-residue protein sequence, read N- to C-terminus: Alanine racemase (372 aa).

Catalysis depends on Lys37, which acts as the Proton acceptor; specific for D-alanine. At Lys37 the chain carries N6-(pyridoxal phosphate)lysine. Arg136 contacts substrate. Tyr265 functions as the Proton acceptor; specific for L-alanine in the catalytic mechanism. Met313 lines the substrate pocket.

Belongs to the alanine racemase family. Requires pyridoxal 5'-phosphate as cofactor.

It carries out the reaction L-alanine = D-alanine. The protein operates within amino-acid biosynthesis; D-alanine biosynthesis; D-alanine from L-alanine: step 1/1. In terms of biological role, catalyzes the interconversion of L-alanine and D-alanine. May also act on other amino acids. The polypeptide is Alanine racemase (alr) (Synechocystis sp. (strain ATCC 27184 / PCC 6803 / Kazusa)).